The chain runs to 261 residues: Oligodendrocyte transcription factor 1 (261 aa).

A disordered region spans residues 41–105 (PPISSSSSTS…LRRKINSRER (65 aa)). Residues 44-56 (SSSSSTSSSSTAS) are compositionally biased toward low complexity. Residues 95 to 154 (QLRRKINSRERKRMQDLNLAMDALREVILPYSAAHCQGAPGRKLSKIATLLLARNYILLL) form the bHLH domain.

As to expression, expressed specifically in the brain, including the corpus callosum, hippocampal and cerebral white matter. Also detected in cells scattered in gray matter, most probably in oligodendrocytes.

It is found in the nucleus. Its function is as follows. Promotes formation and maturation of oligodendrocytes, especially within the brain. Cooperates with OLIG2 to establish the pMN domain of the embryonic neural tube. The chain is Oligodendrocyte transcription factor 1 (Olig1) from Rattus norvegicus (Rat).